The following is a 124-amino-acid chain: MVRLFRNPIKCIFYRRSRKIQEKKLRKSLKKLNFYHPPEDCCQIYRLLENVPGGTYFITENMTNDLIMVVKDSVDKKIKSIKLYLHGSYIKIHQHYYINIYMYLMRYTQIYKYPLICFNKYYNI.

The protein belongs to the asfivirus MGF 100 family.

Plays a role in virus cell tropism, and may be required for efficient virus replication in macrophages. The chain is Protein MGF 100-1R from Ornithodoros (relapsing fever ticks).